The primary structure comprises 284 residues: NAD kinase (284 aa).

Residue aspartate 70 is the Proton acceptor of the active site. NAD(+)-binding positions include 70 to 71 (DG), 139 to 140 (NE), lysine 167, aspartate 169, leucine 177, 180 to 185 (TAYNLS), and glutamine 236.

It belongs to the NAD kinase family. The cofactor is a divalent metal cation.

It localises to the cytoplasm. The enzyme catalyses NAD(+) + ATP = ADP + NADP(+) + H(+). Involved in the regulation of the intracellular balance of NAD and NADP, and is a key enzyme in the biosynthesis of NADP. Catalyzes specifically the phosphorylation on 2'-hydroxyl of the adenosine moiety of NAD to yield NADP. The polypeptide is NAD kinase (Helicobacter pylori (strain ATCC 700392 / 26695) (Campylobacter pylori)).